The chain runs to 306 residues: Glutaminase (306 aa).

Substrate-binding residues include serine 64, asparagine 115, glutamate 159, asparagine 166, tyrosine 190, tyrosine 242, and valine 260.

It belongs to the glutaminase family. As to quaternary structure, homotetramer.

It catalyses the reaction L-glutamine + H2O = L-glutamate + NH4(+). In Vibrio parahaemolyticus serotype O3:K6 (strain RIMD 2210633), this protein is Glutaminase.